A 423-amino-acid polypeptide reads, in one-letter code: Serine--tRNA ligase (423 aa).

Residue 230–232 (TAE) coordinates L-serine. 261–263 (RSE) lines the ATP pocket. Glu-284 contacts L-serine. Residue 348–351 (EISS) participates in ATP binding. Position 383 (Ser-383) interacts with L-serine.

The protein belongs to the class-II aminoacyl-tRNA synthetase family. Type-1 seryl-tRNA synthetase subfamily. As to quaternary structure, homodimer. The tRNA molecule binds across the dimer.

Its subcellular location is the cytoplasm. The catalysed reaction is tRNA(Ser) + L-serine + ATP = L-seryl-tRNA(Ser) + AMP + diphosphate + H(+). It carries out the reaction tRNA(Sec) + L-serine + ATP = L-seryl-tRNA(Sec) + AMP + diphosphate + H(+). Its pathway is aminoacyl-tRNA biosynthesis; selenocysteinyl-tRNA(Sec) biosynthesis; L-seryl-tRNA(Sec) from L-serine and tRNA(Sec): step 1/1. In terms of biological role, catalyzes the attachment of serine to tRNA(Ser). Is also able to aminoacylate tRNA(Sec) with serine, to form the misacylated tRNA L-seryl-tRNA(Sec), which will be further converted into selenocysteinyl-tRNA(Sec). This is Serine--tRNA ligase from Levilactobacillus brevis (strain ATCC 367 / BCRC 12310 / CIP 105137 / JCM 1170 / LMG 11437 / NCIMB 947 / NCTC 947) (Lactobacillus brevis).